Reading from the N-terminus, the 399-residue chain is Chorismate synthase (399 aa).

NADP(+) is bound by residues R40 and R46. Residues 135 to 137 (RAS), 256 to 257 (QA), G301, 316 to 320 (KPIAT), and R342 contribute to the FMN site.

It belongs to the chorismate synthase family. In terms of assembly, homotetramer. The cofactor is FMNH2.

It carries out the reaction 5-O-(1-carboxyvinyl)-3-phosphoshikimate = chorismate + phosphate. It functions in the pathway metabolic intermediate biosynthesis; chorismate biosynthesis; chorismate from D-erythrose 4-phosphate and phosphoenolpyruvate: step 7/7. Its function is as follows. Catalyzes the anti-1,4-elimination of the C-3 phosphate and the C-6 proR hydrogen from 5-enolpyruvylshikimate-3-phosphate (EPSP) to yield chorismate, which is the branch point compound that serves as the starting substrate for the three terminal pathways of aromatic amino acid biosynthesis. This reaction introduces a second double bond into the aromatic ring system. The sequence is that of Chorismate synthase from Pseudarthrobacter chlorophenolicus (strain ATCC 700700 / DSM 12829 / CIP 107037 / JCM 12360 / KCTC 9906 / NCIMB 13794 / A6) (Arthrobacter chlorophenolicus).